Here is a 462-residue protein sequence, read N- to C-terminus: NEDD8-activating enzyme E1 catalytic subunit (462 aa).

A2 bears the N-acetylalanine mark. The tract at residues 53–70 (HPDFEPSTESLQFLLDTC) is interaction with UBE2M N-terminus. ATP contacts are provided by residues 100-124 (DMDT…GRPK) and 148-171 (IQDF…SIIA). Interaction with UBE2M N-terminus stretches follow at residues 157-161 (RQFHI) and 192-217 (PSSI…LPGM). An interaction with NEDD8 region spans residues 227–229 (LYP). Residue C237 is the Glycyl thioester intermediate of the active site. Interaction with NAE1 regions lie at residues 242-248 (MPRLPEH) and 292-295 (YNIR). An interaction with UBE2M N-terminus region spans residues 331–338 (IATSAYIP). Positions 352–357 (YTYTFE) are interaction with NEDD8. The interaction with UBE2M core domain stretch occupies residues 368 to 462 (SQLPQNIQFS…QTVLFKLHFT (95 aa)).

The protein belongs to the ubiquitin-activating E1 family. UBA3 subfamily. As to quaternary structure, heterodimer of UBA3 and NAE1. Interacts with NEDD8, UBE2F and UBE2M. Binds ESR1 and ESR2 with bound steroid ligand. Interacts with TBATA. Ubiquitously expressed.

The enzyme catalyses ATP + [NEDD8 protein] + [E1 NEDD8-activating enzyme]-L-cysteine = AMP + diphosphate + [E1 NEDD8-activating enzyme]-S-[NEDD8 protein]-yl-L-cysteine.. Its pathway is protein modification; protein neddylation. Binding of TP53BP2 to the regulatory subunit NAE1 decreases activity. Its function is as follows. Catalytic subunit of the dimeric UBA3-NAE1 E1 enzyme. E1 activates NEDD8 by first adenylating its C-terminal glycine residue with ATP, thereafter linking this residue to the side chain of the catalytic cysteine, yielding a NEDD8-UBA3 thioester and free AMP. E1 finally transfers NEDD8 to the catalytic cysteine of UBE2M. Down-regulates steroid receptor activity. Necessary for cell cycle progression. The protein is NEDD8-activating enzyme E1 catalytic subunit (Uba3) of Rattus norvegicus (Rat).